A 344-amino-acid polypeptide reads, in one-letter code: Prickle-like protein 4 (344 aa).

Residues 1–81 (MSPQGPAVLS…ARLVLPKLEG (81 aa)) form the PET domain. 2 consecutive LIM zinc-binding domains span residues 82 to 147 (HTCE…LLRP) and 148 to 207 (RCPA…RYSD). A disordered region spans residues 253–344 (GSSLQTQRGL…NASKTHCTMC (92 aa)). The segment covering 257–271 (QTQRGLPGSSPQQEN) has biased composition (polar residues). A compositionally biased stretch (basic and acidic residues) spans 272–296 (RPGDKAEAPKGQEQCRLETIRDPKD). Polar residues predominate over residues 322–344 (SWKTPGSLQAEDSNASKTHCTMC).

It belongs to the prickle / espinas / testin family. As to expression, expressed in a broad range of normal tissues as well as in hepatocellular carcinoma, breast cancer and prostate cancer tissues.

The sequence is that of Prickle-like protein 4 (PRICKLE4) from Homo sapiens (Human).